A 212-amino-acid polypeptide reads, in one-letter code: Golgi SNAP receptor complex member 2 homolog memb-1 (212 aa).

Over 1–189 the chain is Cytoplasmic; the sequence is MEAQYQSTNF…QVIDRRVRED (189 aa). The chain crosses the membrane as a helical; Anchor for type IV membrane protein span at residues 190–210; the sequence is WIFVIGCIVCCIFMYAFYRFW. The Vesicular portion of the chain corresponds to 211-212; the sequence is RG.

This sequence belongs to the GOSR2 family. As to quaternary structure, part of a unique SNARE complex.

It is found in the golgi apparatus. Its subcellular location is the cis-Golgi network membrane. The protein resides in the golgi apparatus membrane. It localises to the endoplasmic reticulum membrane. Functionally, involved in transport of proteins from the cis/medial-Golgi to the trans-Golgi network. This chain is Golgi SNAP receptor complex member 2 homolog memb-1, found in Caenorhabditis briggsae.